The following is a 942-amino-acid chain: Netrin receptor UNC5B-b (942 aa).

A signal peptide spans 1 to 30 (MYLSRIPGGAALAALLVALLLCCNFPPSIA). The Extracellular portion of the chain corresponds to 31–380 (GIEYSDVLPD…LESTGDVALY (350 aa)). Positions 51-148 (PHFLLEPEDA…AGTTKSKRSY (98 aa)) constitute an Ig-like domain. Cystine bridges form between C72–C133, C84–C131, C177–C228, C261–C298, C265–C302, C276–C288, C317–C351, C321–C356, and C329–C341. The 96-residue stretch at 150 to 245 (RIAYLRKNFD…KRRSTTATVI (96 aa)) folds into the Ig-like C2-type domain. N225 carries N-linked (GlcNAc...) asparagine glycosylation. 2 TSP type-1 domains span residues 249–303 (NGGW…TMCP) and 305–357 (DGGW…GLCM). N-linked (GlcNAc...) asparagine glycosylation is present at N350. The chain crosses the membrane as a helical span at residues 381-401 (AGLVVAIFIIIILLMAVGIVV). The Cytoplasmic segment spans residues 402–942 (YRRNCREFDT…MLVMATDGDC (541 aa)). Residues 541–684 (NSVTGTFGSL…LGTYAFVGES (144 aa)) enclose the ZU5 domain. The interval 687 to 835 (RSAIKRLQLA…LEENVKSFDP (149 aa)) is UPA domain. Residues 863-940 (ICNSLDAPNS…EMMLVMATDG (78 aa)) enclose the Death domain.

This sequence belongs to the unc-5 family. In terms of assembly, interacts (via extracellular domain) with flrt3 (via extracellular domain). Interacts with rnd1.

The protein localises to the cell membrane. Plays a role in cell-cell adhesion during embryonic development. Receptor for netrin required for axon guidance. Mediates axon repulsion of neuronal growth cones in the developing nervous system upon ligand binding. This chain is Netrin receptor UNC5B-b, found in Xenopus laevis (African clawed frog).